Here is a 221-residue protein sequence, read N- to C-terminus: Vesicle-associated membrane protein 713 (221 aa).

Position 2 is an N-acetylalanine (alanine 2). Over 2–190 (AIIFALVARG…RTIMWWRNVK (189 aa)) the chain is Cytoplasmic. Residues 7-112 (LVARGTVVLS…SMNDEFSRVL (106 aa)) enclose the Longin domain. Positions 127–187 (RMSRIKGEMS…RRYRTIMWWR (61 aa)) constitute a v-SNARE coiled-coil homology domain. A helical; Anchor for type IV membrane protein membrane pass occupies residues 191–211 (LTIALILVLALVVYIAMAFVC). Topologically, residues 212–221 (HGPSLPSCFK) are vesicular.

The protein belongs to the synaptobrevin family. As to quaternary structure, interacts with subunits of the vacuole protein sorting (HOPS) complex including VPS11, VCL1, VPS18, VPS33, VPS39 and VPS41. As to expression, highly expressed in stems and roots. Detected in flowers and leaves.

The protein resides in the vacuole membrane. It is found in the prevacuolar compartment membrane. Functionally, involved in the targeting and/or fusion of transport vesicles to their target membrane. The sequence is that of Vesicle-associated membrane protein 713 from Arabidopsis thaliana (Mouse-ear cress).